The chain runs to 470 residues: MTKTLPEDFIFGGATAAYQAEGATNTDGKGRVAWDTYLEENYWYTAEPASDFYNRYPVDLELSEKFGVNGIRISIAWSRIFPNGYGEVNPKGVEYYHKLFAECHKRHVEPFVTLHHFDTPEVLHKDGDFLNRKTIDYFVDYAEYCFKEFPEVKYWTTFNEIGPIGDGQYLVGKFPPGIKYDFEKVFQSHHNMMVAHARAVKLFKDGGYQGEIGVVHALPTKYPFDPSNPEDVRAAELEDIIHNKFILDATYLGKYSRETMEGVQHILSVNGGKLNITDEDYAILDAAKDLNDFLGINYYMSDWMRGYDGESEITHNATGDKGGSKYQLKGVGQREFDVDVPRTDWDWMIYPQGLYDQIMRVVKDYPNYHKIYITENGLGYKDEFIESEKTVHDDARIDYVRQHLNVIADAIKDGANVKGYFIWSLMDVFSWSNGYEKRYGLFYVDFETQERYPKKSAYWYKELAETKEIK.

D-galactose 6-phosphate is bound by residues Q19, H116, N159, E160, and N297. Residue E160 is the Proton donor of the active site. E375 serves as the catalytic Nucleophile. The D-galactose 6-phosphate site is built by S430, W431, K437, and Y439.

This sequence belongs to the glycosyl hydrolase 1 family.

It carries out the reaction a 6-phospho-beta-D-galactoside + H2O = D-galactose 6-phosphate + an alcohol. It participates in carbohydrate metabolism; lactose degradation; D-galactose 6-phosphate and beta-D-glucose from lactose 6-phosphate: step 1/1. The sequence is that of 6-phospho-beta-galactosidase from Staphylococcus aureus (strain Mu3 / ATCC 700698).